The chain runs to 433 residues: Aspartate--tRNA(Asp/Asn) ligase (433 aa).

Glu167 lines the L-aspartate pocket. The segment at 189 to 192 (QLFK) is aspartate. L-aspartate is bound at residue Arg211. Residues 211 to 213 (RAE), 219 to 221 (RHL), and Glu356 each bind ATP. Glu356 and Ser359 together coordinate Mg(2+). The L-aspartate site is built by Ser359 and Arg363. 404–407 (GGER) contributes to the ATP binding site.

The protein belongs to the class-II aminoacyl-tRNA synthetase family. Type 2 subfamily. Homodimer. Mg(2+) serves as cofactor.

It is found in the cytoplasm. The enzyme catalyses tRNA(Asx) + L-aspartate + ATP = L-aspartyl-tRNA(Asx) + AMP + diphosphate. Aspartyl-tRNA synthetase with relaxed tRNA specificity since it is able to aspartylate not only its cognate tRNA(Asp) but also tRNA(Asn). Reaction proceeds in two steps: L-aspartate is first activated by ATP to form Asp-AMP and then transferred to the acceptor end of tRNA(Asp/Asn). In Natronomonas pharaonis (strain ATCC 35678 / DSM 2160 / CIP 103997 / JCM 8858 / NBRC 14720 / NCIMB 2260 / Gabara) (Halobacterium pharaonis), this protein is Aspartate--tRNA(Asp/Asn) ligase.